The chain runs to 1165 residues: Error-prone DNA polymerase (1165 aa).

The segment at 1111 to 1165 (SEGLARPPLPTGADLYEPLTYEPLNGDRRDNPDAPAQRLRHPRDVRILPPSRDFH) is disordered. Over residues 1152-1165 (PRDVRILPPSRDFH) the composition is skewed to basic and acidic residues.

This sequence belongs to the DNA polymerase type-C family. DnaE2 subfamily.

The protein localises to the cytoplasm. It carries out the reaction DNA(n) + a 2'-deoxyribonucleoside 5'-triphosphate = DNA(n+1) + diphosphate. Functionally, DNA polymerase involved in damage-induced mutagenesis and translesion synthesis (TLS). It is not the major replicative DNA polymerase. This is Error-prone DNA polymerase from Rhodopseudomonas palustris (strain HaA2).